A 178-amino-acid chain; its full sequence is Oligoribonuclease (178 aa).

The Exonuclease domain maps to 7-168 (LIWIDLEMTG…DDIRESIAEL (162 aa)). Residue Y128 is part of the active site.

Belongs to the oligoribonuclease family.

The protein resides in the cytoplasm. Functionally, 3'-to-5' exoribonuclease specific for small oligoribonucleotides. The chain is Oligoribonuclease from Francisella tularensis subsp. tularensis (strain FSC 198).